Consider the following 123-residue polypeptide: Ribosome-binding factor A (123 aa).

It belongs to the RbfA family. In terms of assembly, monomer. Binds 30S ribosomal subunits, but not 50S ribosomal subunits or 70S ribosomes.

Its subcellular location is the cytoplasm. One of several proteins that assist in the late maturation steps of the functional core of the 30S ribosomal subunit. Associates with free 30S ribosomal subunits (but not with 30S subunits that are part of 70S ribosomes or polysomes). Required for efficient processing of 16S rRNA. May interact with the 5'-terminal helix region of 16S rRNA. This Magnetococcus marinus (strain ATCC BAA-1437 / JCM 17883 / MC-1) protein is Ribosome-binding factor A.